Consider the following 1040-residue polypeptide: Activated CDC42 kinase 1 (1040 aa).

The tract at residues 1-110 (MQPEEGTGWL…PSPTPGGLAG (110 aa)) is SAM-like domain. The disordered stretch occupies residues 86-109 (EAEFPSHHSQSTFRKPSPTPGGLA). Position 113 is a phosphothreonine (Thr-113). The Protein kinase domain maps to 126–385 (LRLLEKLGDG…PTFVALRDFL (260 aa)). Residues 132 to 140 (LGDGSFGVV) and Lys-158 each bind ATP. Asp-252 (proton acceptor) is an active-site residue. Tyr-284 bears the Phosphotyrosine; by SRC and autocatalysis mark. In terms of domain architecture, SH3 spans 388–448 (AQPTDMRALQ…PRNVVTSVAG (61 aa)). A disordered region spans residues 505-527 (RPTQHLGRMKKPTYDPVSEDPDP). At Tyr-518 the chain carries Phosphotyrosine. The required for interaction with SRC stretch occupies residues 623-652 (DWDARPLPPPPAYDDVAQDEDDFEVCSINS). A required for interaction with NEDD4 region spans residues 632 to 635 (PPAY). A disordered region spans residues 722-824 (TGQLTPSPTP…MPTTQSFASD (103 aa)). Residues 733-876 (GDDKPQVPPR…PYLERYQRFL (144 aa)) form an EBD domain region. 2 stretches are compositionally biased toward pro residues: residues 738-749 (QVPPRVPIPPRP) and 772-783 (PSSPPRVPPREP). A compositionally biased stretch (low complexity) spans 802–812 (PLPHRLSSSPG). Residue Tyr-827 is modified to Phosphotyrosine. The residue at position 839 (Arg-839) is an Omega-N-methylarginine. A phosphotyrosine mark is found at Tyr-859 and Tyr-872. Position 881 is a phosphoserine (Ser-881). The segment at 881 to 957 (SPEEPAALPV…CPGDGQEAAR (77 aa)) is disordered. A compositionally biased stretch (pro residues) spans 888–903 (LPVPPLLPPPSTPAPA). A compositionally biased stretch (polar residues) spans 922–931 (NFSTNNSNPG). The region spanning 958 to 998 (PADKVQMLQAMVHGVTTEECQAALRSHSWSIQRAAQYLKVE) is the UBA domain.

The protein belongs to the protein kinase superfamily. Tyr protein kinase family. In terms of assembly, homodimer. Interacts with CDC42. Interacts with CSPG4 (activated). Interacts with MERTK (activated); stimulates autophosphorylation. May interact (phosphorylated) with HSP90AB1; maintains kinase activity. Interacts with NPHP1. Interacts with SNX9 (via SH3 domain). Interacts with SRC (via SH2 and SH3 domain). Interacts with EGFR, and this interaction is dependent on EGF stimulation and kinase activity of EGFR. Interacts (via kinase domain) with AKT1. Part of a collagen stimulated complex involved in cell migration composed of CDC42, CRK, TNK2 and BCAR1/p130cas. Interacts with BCAR1/p130cas via SH3 domains. Forms complexes with GRB2 and numerous receptor tyrosine kinases (RTK) including LTK, AXL or PDGFRL, in which GRB2 promotes RTK recruitment by TNK2. Interacts with NEDD4 (via WW3 domain). NEDD4L and EGF promote association with NEDD4. The cofactor is Mg(2+). In terms of processing, autophosphorylation regulates kinase activity. Phosphorylation on Tyr-518 is required for interaction with SRC and is observed during association with clathrin-coated pits. Post-translationally, polyubiquitinated by NEDD4 and NEDD4L. Degradation can be induced by EGF and is lysosome-dependent.

Its subcellular location is the cell membrane. The protein localises to the nucleus. It is found in the endosome. The protein resides in the cell junction. It localises to the adherens junction. Its subcellular location is the cytoplasmic vesicle membrane. The protein localises to the cytoplasmic vesicle. It is found in the clathrin-coated vesicle. The protein resides in the membrane. It localises to the clathrin-coated pit. Its subcellular location is the cytoplasm. The protein localises to the cytosol. It catalyses the reaction L-tyrosyl-[protein] + ATP = O-phospho-L-tyrosyl-[protein] + ADP + H(+). The catalysed reaction is L-seryl-[protein] + ATP = O-phospho-L-seryl-[protein] + ADP + H(+). It carries out the reaction L-threonyl-[protein] + ATP = O-phospho-L-threonyl-[protein] + ADP + H(+). Functionally, non-receptor tyrosine-protein and serine/threonine-protein kinase that is implicated in cell spreading and migration, cell survival, cell growth and proliferation. Transduces extracellular signals to cytosolic and nuclear effectors. Phosphorylates AKT1, AR, MCF2, WASL and WWOX. Implicated in trafficking and clathrin-mediated endocytosis through binding to epidermal growth factor receptor (EGFR) and clathrin. Binds to both poly- and mono-ubiquitin and regulates ligand-induced degradation of EGFR, thereby contributing to the accumulation of EGFR at the limiting membrane of early endosomes. Downstream effector of CDC42 which mediates CDC42-dependent cell migration via phosphorylation of BCAR1. May be involved both in adult synaptic function and plasticity and in brain development. Activates AKT1 by phosphorylating it on 'Tyr-176'. Phosphorylates AR on 'Tyr-267' and 'Tyr-363', thereby promoting its recruitment to androgen-responsive enhancers (AREs). Phosphorylates WWOX on 'Tyr-287'. Phosphorylates MCF2, thereby enhancing its activity as a guanine nucleotide exchange factor (GEF) toward Rho family proteins. Contributes to the control of AXL receptor levels. Confers metastatic properties on cancer cells and promotes tumor growth by negatively regulating tumor suppressor such as WWOX and positively regulating pro-survival factors such as AKT1 and AR. The polypeptide is Activated CDC42 kinase 1 (Rattus norvegicus (Rat)).